The primary structure comprises 723 residues: Homeobox protein vnd (723 aa).

Disordered regions lie at residues 1–115 (MTTS…GLAP), 224–307 (AHHG…HHHP), 465–549 (GSSG…RKRR), and 703–723 (HAHA…AWWP). Residues 10–22 (TPSKRDRDRERDN) are compositionally biased toward basic and acidic residues. Over residues 23–36 (SSGLGSAGSLPASP) the composition is skewed to low complexity. The segment covering 37 to 48 (QSAITVSPSSPA) has biased composition (polar residues). A compositionally biased stretch (basic and acidic residues) spans 61-92 (LERKREREDREDREDRKERQERHERDRDHERF). Residues 97-111 (STASTTVPTNTSSSS) are compositionally biased toward low complexity. Residues 226-235 (HGSDLSHHSA) are compositionally biased toward basic and acidic residues. Polar residues predominate over residues 237–255 (ESTSGHRGQGSHTSPSALS). A compositionally biased stretch (basic and acidic residues) spans 278 to 289 (EADHHSTTEHHA). The span at 298–307 (HPHHQQHHHP) shows a compositional bias: basic residues. The segment covering 483-493 (NNNNNTTNNNN) has biased composition (low complexity). Acidic residues predominate over residues 512–528 (LNEDGIEEDIDDVDDAD). The segment at residues 545–604 (KRKRRVLFTKAQTYELERRFRQQRYLSAPEREHLASLIRLTPTQVKIWFQNHRYKTKRAQ) is a DNA-binding region (homeobox). The segment covering 703–716 (HAHAHGHGHPHAHA) has biased composition (basic residues).

This sequence belongs to the NK-2 homeobox family. Expressed in the CNS and midgut.

It is found in the nucleus. Probable transcriptional regulator involved in the regulation of the proneural AS-C genes and the neurogenic genes of the enhancer of split complex. Could specifically activate proneural genes in the ventral-most neuroectoderm. In Drosophila melanogaster (Fruit fly), this protein is Homeobox protein vnd (vnd).